The chain runs to 230 residues: MYDITKWKHMFKLDPAKSISDENLEALCMSNTDAIIIGGTDDVTEDNVIHLMSRVRRYPLPLVLEVSNVESVMPGFDFYFIPTVMNSKDTKYHNEILLEALKKYGHVINFDEVFFEGYVVLNANSKVAKITKAYTQLGIEDVEAYAQMAEELYRFPIMYVEYSGTYGDVDKVKAIANMLQHTQLFYGGGITNIDKANEMSNIADTIVVGDIIYNDIKKALKTVKIKESNK.

K12 contributes to the sn-glycerol 1-phosphate binding site. Mg(2+) contacts are provided by D14 and T40. Residues 159-164, G189, and 209-210 contribute to the sn-glycerol 1-phosphate site; these read YVEYSG and GD.

Belongs to the GGGP/HepGP synthase family. Group I subfamily. Homodimer. Mg(2+) serves as cofactor.

It catalyses the reaction sn-glycerol 1-phosphate + all-trans-heptaprenyl diphosphate = 3-heptaprenyl-sn-glycero-1-phosphate + diphosphate. The protein operates within membrane lipid metabolism; glycerophospholipid metabolism. Prenyltransferase that catalyzes in vivo the transfer of the heptaprenyl moiety of heptaprenyl pyrophosphate (HepPP; 35 carbon atoms) to the C3 hydroxyl of sn-glycerol-1-phosphate (G1P), producing heptaprenylglyceryl phosphate (HepGP). This reaction is an ether-bond-formation step in the biosynthesis of archaea-type G1P-based membrane lipids found in Bacillales. The protein is Heptaprenylglyceryl phosphate synthase of Staphylococcus epidermidis (strain ATCC 35984 / DSM 28319 / BCRC 17069 / CCUG 31568 / BM 3577 / RP62A).